The sequence spans 356 residues: 4-hydroxybenzoate polyprenyltransferase, mitochondrial (356 aa).

The transit peptide at 1-44 (MITRSIGIARRSNSINCIVGSNTSTSYSLDESTKRWISTSTKQP) directs the protein to the mitochondrion. 6 helical membrane passes run 71–91 (VDKP…IAMA), 93–113 (PAGQ…AFLM), 150–170 (AIGL…QLNW), 195–215 (WPQF…WCAL), 269–289 (WLSA…IASD), and 332–352 (IILF…QILI).

It belongs to the UbiA prenyltransferase family. Mg(2+) is required as a cofactor.

The protein localises to the mitochondrion inner membrane. It catalyses the reaction an all-trans-polyprenyl diphosphate + 4-hydroxybenzoate = a 4-hydroxy-3-(all-trans-polyprenyl)benzoate + diphosphate. It participates in cofactor biosynthesis; ubiquinone biosynthesis. Functionally, catalyzes the prenylation of para-hydroxybenzoate (PHB) with an all-trans polyprenyl group. Mediates the second step in the final reaction sequence of coenzyme Q (CoQ) biosynthesis, which is the condensation of the polyisoprenoid side chain with PHB, generating the first membrane-bound Q intermediate. This Caenorhabditis elegans protein is 4-hydroxybenzoate polyprenyltransferase, mitochondrial (coq-2).